Consider the following 539-residue polypeptide: ATP synthase subunit beta (539 aa).

Positions 1 to 44 (MAKTPAEKPATAAKKPAAPKAAAAPKAAAAKAPAAAKAPAAKKP) are disordered. 212–219 (GGAGVGKT) provides a ligand contact to ATP.

This sequence belongs to the ATPase alpha/beta chains family. F-type ATPases have 2 components, CF(1) - the catalytic core - and CF(0) - the membrane proton channel. CF(1) has five subunits: alpha(3), beta(3), gamma(1), delta(1), epsilon(1). CF(0) has three main subunits: a(1), b(2) and c(9-12). The alpha and beta chains form an alternating ring which encloses part of the gamma chain. CF(1) is attached to CF(0) by a central stalk formed by the gamma and epsilon chains, while a peripheral stalk is formed by the delta and b chains.

The protein localises to the cell inner membrane. It catalyses the reaction ATP + H2O + 4 H(+)(in) = ADP + phosphate + 5 H(+)(out). Produces ATP from ADP in the presence of a proton gradient across the membrane. The catalytic sites are hosted primarily by the beta subunits. This Caulobacter vibrioides (strain ATCC 19089 / CIP 103742 / CB 15) (Caulobacter crescentus) protein is ATP synthase subunit beta.